A 232-amino-acid polypeptide reads, in one-letter code: 2,3-bisphosphoglycerate-dependent phosphoglycerate mutase (232 aa).

Substrate contacts are provided by residues 10–17 (RHGESQWN), 23–24 (TG), Arg-62, 89–92 (ERHY), Lys-100, 116–117 (RR), and 186–187 (GN). Catalysis depends on His-11, which acts as the Tele-phosphohistidine intermediate. Glu-89 acts as the Proton donor/acceptor in catalysis.

This sequence belongs to the phosphoglycerate mutase family. BPG-dependent PGAM subfamily. As to quaternary structure, homodimer.

It carries out the reaction (2R)-2-phosphoglycerate = (2R)-3-phosphoglycerate. It participates in carbohydrate degradation; glycolysis; pyruvate from D-glyceraldehyde 3-phosphate: step 3/5. Catalyzes the interconversion of 2-phosphoglycerate and 3-phosphoglycerate. The sequence is that of 2,3-bisphosphoglycerate-dependent phosphoglycerate mutase from Blochmanniella pennsylvanica (strain BPEN).